A 178-amino-acid chain; its full sequence is Peptide deformylase (178 aa).

Fe cation is bound by residues Cys92 and His134. Residue Glu135 is part of the active site. His138 lines the Fe cation pocket.

The protein belongs to the polypeptide deformylase family. It depends on Fe(2+) as a cofactor.

It carries out the reaction N-terminal N-formyl-L-methionyl-[peptide] + H2O = N-terminal L-methionyl-[peptide] + formate. Functionally, removes the formyl group from the N-terminal Met of newly synthesized proteins. Requires at least a dipeptide for an efficient rate of reaction. N-terminal L-methionine is a prerequisite for activity but the enzyme has broad specificity at other positions. This Alkalilimnicola ehrlichii (strain ATCC BAA-1101 / DSM 17681 / MLHE-1) protein is Peptide deformylase.